Here is a 478-residue protein sequence, read N- to C-terminus: Proline--tRNA ligase (478 aa).

This sequence belongs to the class-II aminoacyl-tRNA synthetase family. ProS type 3 subfamily. Homodimer.

The protein localises to the cytoplasm. It carries out the reaction tRNA(Pro) + L-proline + ATP = L-prolyl-tRNA(Pro) + AMP + diphosphate. Its function is as follows. Catalyzes the attachment of proline to tRNA(Pro) in a two-step reaction: proline is first activated by ATP to form Pro-AMP and then transferred to the acceptor end of tRNA(Pro). This Clostridium botulinum (strain Kyoto / Type A2) protein is Proline--tRNA ligase.